Consider the following 427-residue polypeptide: Inward rectifier potassium channel 2 (427 aa).

The Cytoplasmic segment spans residues 1 to 81; it reads MGSVRTNRYS…IFTTCVDIRW (81 aa). The residue at position 76 (Cys76) is an S-nitrosocysteine. Residues 82 to 106 traverse the membrane as a helical segment; that stretch reads RWMLVIFCLAFVLSWLFFGCVFWLI. At 107-128 the chain is on the extracellular side; that stretch reads ALLHGDLDASKESKACVSEVNS. The helical; Pore-forming intramembrane region spans 129–140; sequence FTAAFLFSIETQ. Residues 141–147 constitute an intramembrane region (pore-forming); the sequence is TTIGYGF. The Selectivity filter signature appears at 142–147; it reads TIGYGF. Topologically, residues 148–156 are extracellular; it reads RCVTDECPI. The helical transmembrane segment at 157 to 178 threads the bilayer; that stretch reads AVFMVVFQSIVGCIIDAFIIGA. The Cytoplasmic segment spans residues 179–427; that stretch reads VMAKMAKPKK…PRPLRRESEI (249 aa). Residues 181-208 are polyphosphoinositide (PIP2)-binding; sequence AKMAKPKKRNETLVFSHNAVIAMRDGKL. The segment at 383-427 is disordered; the sequence is TSKEEEDSENGVPESTSTDSPPGIDLHNQASVPLEPRPLRRESEI. The PDZ-binding motif lies at 425–427; sequence SEI.

It belongs to the inward rectifier-type potassium channel (TC 1.A.2.1) family. KCNJ2 subfamily. In terms of assembly, homotetramer. Homomultimeric and heteromultimeric association with KCNJ4/Kir2.3. Can form heteromeric channels with Kir2.6/KCNJ18. Associates, via its PDZ-recognition domain, with a complex containing LIN7A, LIN7B, LIN7C, DLG1, CASK and APBA1. Post-translationally, S-nitrosylation increases the open probability and inward rectifying currents. Prominently expressed in the central nervous system. Also found in other excitable tissues such as heart and skeletal muscle.

It is found in the cell membrane. The protein localises to the sarcolemma. Its subcellular location is the T-tubule. It catalyses the reaction K(+)(in) = K(+)(out). Activated by phosphatidylinositol 4,5 biphosphate (PtdIns(4,5)P2). Functionally, inward rectifier potassium channels are characterized by a greater tendency to allow potassium to flow into the cell rather than out of it. Their voltage dependence is regulated by the concentration of extracellular potassium; as external potassium is raised, the voltage range of the channel opening shifts to more positive voltages. The inward rectification is mainly due to the blockage of outward current by internal magnesium. Can be blocked by extracellular barium and cesium. Probably participates in establishing action potential waveform and excitability of neuronal and muscle tissues. The sequence is that of Inward rectifier potassium channel 2 (Kcnj2) from Rattus norvegicus (Rat).